The chain runs to 221 residues: GTP cyclohydrolase 1 (221 aa).

Positions 109, 112, and 180 each coordinate Zn(2+).

It belongs to the GTP cyclohydrolase I family. As to quaternary structure, toroid-shaped homodecamer, composed of two pentamers of five dimers.

The enzyme catalyses GTP + H2O = 7,8-dihydroneopterin 3'-triphosphate + formate + H(+). It functions in the pathway cofactor biosynthesis; 7,8-dihydroneopterin triphosphate biosynthesis; 7,8-dihydroneopterin triphosphate from GTP: step 1/1. The chain is GTP cyclohydrolase 1 from Blochmanniella pennsylvanica (strain BPEN).